The sequence spans 678 residues: uncharacterized protein (678 aa).

The interval 1–26 (MGVHFDDNANTTWEATDPGVSSDCDG) is disordered. The next 9 helical transmembrane spans lie at 119-139 (LLLLIVYCCFWMRIFYSLIYP), 245-265 (SFPCASAVHAGVISPFYGGCT), 317-337 (AAVVALNMLFGLPIFYLYDSI), 340-360 (YWINTIVGYWTLVLSLDPPLL), 371-391 (ELFSVGFQRLLPLCFVLYVVW), 405-425 (IAKVILWYPTFWLGISNNVTF), 443-463 (GALTAVGSIAATILTCAVIQA), 475-495 (YFKIYICFIGGLIALGSLPGL), and 519-539 (AYLFQGILVGLILSGVARWDF).

It localises to the vacuole membrane. This is an uncharacterized protein from Saccharomyces cerevisiae (strain ATCC 204508 / S288c) (Baker's yeast).